Reading from the N-terminus, the 854-residue chain is Rod cGMP-specific 3',5'-cyclic phosphodiesterase subunit beta (854 aa).

Ser2 is subject to N-acetylserine. 2 consecutive GAF domains span residues 71–220 and 252–429; these read NMER…TLYL and DIER…GWSV. Positions 481–814 constitute a PDEase domain; that stretch reads DEDELGEILK…KEWKALADEY (334 aa). His557 acts as the Proton donor in catalysis. A divalent metal cation contacts are provided by His561, His597, Asp598, and Asp718. Residue Cys851 is the site of S-geranylgeranyl cysteine attachment. A propeptide spans 852–854 (removed in mature form); the sequence is CIL.

This sequence belongs to the cyclic nucleotide phosphodiesterase family. Oligomer composed of two catalytic chains (alpha and beta), an inhibitory chain (gamma) and the delta chain. A divalent metal cation serves as cofactor.

The protein resides in the membrane. Its subcellular location is the cell projection. It is found in the cilium. It localises to the photoreceptor outer segment. The enzyme catalyses 3',5'-cyclic GMP + H2O = GMP + H(+). Its function is as follows. Rod-specific cGMP phosphodiesterase that catalyzes the hydrolysis of 3',5'-cyclic GMP. Necessary for the formation of a functional phosphodiesterase holoenzyme. Involved in retinal circadian rhythm photoentrainment via modulation of UVA and orange light-induced phase-shift of the retina clock. May participate in processes of transmission and amplification of the visual signal. This Homo sapiens (Human) protein is Rod cGMP-specific 3',5'-cyclic phosphodiesterase subunit beta.